Reading from the N-terminus, the 935-residue chain is MLKTLFGDPNARKLKKFQPFVTEVNLLEEEIQKLSDEELKYKTVEFREALDKARNDEELEDILDEILPEAFAVVREAGIRVLGMRHFDVQLLGGIVLHKGQIAEMKTGEGKTLVATLPAYLNGLTGKGVHVVTVNDYLARRDAEWMGQVHRFLGLSVGLIQGGMNPEERKKNYGCDITYTTNSELGFDYLRDNMATAMAEVVQRPFNYCIIDEVDSILIDEARTPLIISGQVERPTEKYLQAAAIAAQLLKQESEDDPGDYEVDEKARNVLMTDAGFEKAEQLLNVQDLYDQDNPWAHYIFNAIKAKELFTKDVNYMIRNNEIVIVDEFTGRVLPGRRWSDGLHQAIEAKEGVEIQRETQTLATITYQNFFLLYPKLSGMTGTAKTEETELEKVYNLQVTIIPTNRISRRYDLPDVVYKTEDAKWQAVAGEVEELHHQGRPILVGTTSVEKSEVLSKLLQQKKIHHNLLNARPENVERESEIVAQAGRKGAVTIATNMAGRGTDIILGGNADYMARLKIREYLMPQIVMPEDDDLMAGVSGNGGRRPQGFGTSKKKGKNWSPSDADIFPTKMSQETEEILKEAVKFAVEQYGQQSLTELEAEEKIAIASENAPTDDSVVEKLRVVYKAIRKTYETVTDQEHDEVVELGGLHVIGTERHESRRIDNQLRGRAGRQGDPGSTKFFLSLEDNLLRIFGGDRVAGLMNAFRVEEDMPIESQMLTRSLEGAQKKVETFYYDTRKQVFEYDEVMNNQRRAIYAERRRVLEGLDLKEQVLQYAEKTMDEIVDAYVNPELPPEEWDIPNLVGKVKEFVYLLKDVTPQDMEDMTVSEMKIFLHEEVRKAYDIKEYEVDQIRPGLMREAERFFILQQIDTLWREHLQTMDALRESIGLRGYGQQDPLIEYKQEGYEMFLEMMIDIRRNVVYSLFQFQPQGQPQTV.

ATP is bound by residues Q90, 108-112 (GEGKT), and D504. The interval 543 to 568 (GGRRPQGFGTSKKKGKNWSPSDADIF) is disordered.

It belongs to the SecA family. Monomer and homodimer. Part of the essential Sec protein translocation apparatus which comprises SecA, SecYEG and auxiliary proteins SecDF. Other proteins may also be involved.

It is found in the cell inner membrane. It localises to the cellular thylakoid membrane. The protein resides in the cytoplasm. It carries out the reaction ATP + H2O + cellular proteinSide 1 = ADP + phosphate + cellular proteinSide 2.. Functionally, part of the Sec protein translocase complex. Interacts with the SecYEG preprotein conducting channel. Has a central role in coupling the hydrolysis of ATP to the transfer of proteins into and across the cell membrane, serving as an ATP-driven molecular motor driving the stepwise translocation of polypeptide chains across the membrane. In terms of biological role, probably participates in protein translocation into and across both the cytoplasmic and thylakoid membranes in cyanobacterial cells. In Rippkaea orientalis (strain PCC 8801 / RF-1) (Cyanothece sp. (strain PCC 8801)), this protein is Protein translocase subunit SecA.